We begin with the raw amino-acid sequence, 441 residues long: 3'-N-debenzoyl-2'-deoxytaxol N-benzoyltransferase (441 aa).

Active-site proton acceptor residues include H163 and D373.

This sequence belongs to the plant acyltransferase family.

The enzyme catalyses 3'-N-debenzoyltaxol + benzoyl-CoA = paclitaxel + CoA + H(+). It participates in alkaloid biosynthesis; taxol biosynthesis. In terms of biological role, catalyzes the stereoselective coupling of the surrogate substrate N-debenzoyl-(3'RS)-2'-deoxytaxol with benzoyl-CoA to form predominantly one 3'-epimer of 2'-deoxytaxol. This enzymatic reaction constitutes the final acylation in the taxol biosynthetic pathway. The protein is 3'-N-debenzoyl-2'-deoxytaxol N-benzoyltransferase of Taxus canadensis (Canadian yew).